Consider the following 282-residue polypeptide: MGKGNEDPDLHCSSIQCSTDQPPFQQISFTEKGSDEKKPFKGKGKTAFSHSSEKHTQRQAGSDPNPNKENSEETKLKAGNSTAGSEPESSSYQENCRKRKISSKDICQDRAGNCPEEECNLTLNKKSRSSTAVHNSEIQETCDAHHRGSSRACTGRSKRHRSRALEVQTPSLRKSLVTSVRAMSEAVYQDLAQVWAQQIHSPLTCEQLTLLTRLRGPLCAQVQTLYSMATQAAYVFPAESWLVPATLPGPGDSALDREAHPFPGQEITEPVSGSDEAKLGAP.

Residues 1–10 (MGKGNEDPDL) show a composition bias toward basic and acidic residues. Disordered regions lie at residues 1–96 (MGKG…QENC) and 249–282 (GPGD…LGAP). Composition is skewed to polar residues over residues 13 to 31 (SSIQ…SFTE), 58 to 68 (RQAGSDPNPNK), and 79 to 94 (GNST…SYQE).

It belongs to the FRG2 family.

Its subcellular location is the nucleus. This is Protein FRG2-like-2 (FRG2C) from Homo sapiens (Human).